The following is a 225-amino-acid chain: Biosynthetic peptidoglycan transglycosylase (225 aa).

The helical transmembrane segment at 9–29 (LLIFIGAILLIQLWIFSSLVW) threads the bilayer.

It belongs to the glycosyltransferase 51 family.

It localises to the cell inner membrane. It catalyses the reaction [GlcNAc-(1-&gt;4)-Mur2Ac(oyl-L-Ala-gamma-D-Glu-L-Lys-D-Ala-D-Ala)](n)-di-trans,octa-cis-undecaprenyl diphosphate + beta-D-GlcNAc-(1-&gt;4)-Mur2Ac(oyl-L-Ala-gamma-D-Glu-L-Lys-D-Ala-D-Ala)-di-trans,octa-cis-undecaprenyl diphosphate = [GlcNAc-(1-&gt;4)-Mur2Ac(oyl-L-Ala-gamma-D-Glu-L-Lys-D-Ala-D-Ala)](n+1)-di-trans,octa-cis-undecaprenyl diphosphate + di-trans,octa-cis-undecaprenyl diphosphate + H(+). It functions in the pathway cell wall biogenesis; peptidoglycan biosynthesis. Its function is as follows. Peptidoglycan polymerase that catalyzes glycan chain elongation from lipid-linked precursors. The sequence is that of Biosynthetic peptidoglycan transglycosylase from Acinetobacter baumannii (strain SDF).